We begin with the raw amino-acid sequence, 444 residues long: ATP-dependent protease ATPase subunit HslU (444 aa).

ATP-binding positions include isoleucine 20, 62 to 67 (GVGKTE), aspartate 257, glutamate 322, and arginine 394.

The protein belongs to the ClpX chaperone family. HslU subfamily. As to quaternary structure, a double ring-shaped homohexamer of HslV is capped on each side by a ring-shaped HslU homohexamer. The assembly of the HslU/HslV complex is dependent on binding of ATP.

It localises to the cytoplasm. Functionally, ATPase subunit of a proteasome-like degradation complex; this subunit has chaperone activity. The binding of ATP and its subsequent hydrolysis by HslU are essential for unfolding of protein substrates subsequently hydrolyzed by HslV. HslU recognizes the N-terminal part of its protein substrates and unfolds these before they are guided to HslV for hydrolysis. The polypeptide is ATP-dependent protease ATPase subunit HslU (Bordetella avium (strain 197N)).